The primary structure comprises 297 residues: Bifunctional protein FolD (297 aa).

NADP(+) contacts are provided by residues 167–169 (GRS) and Ile-233.

It belongs to the tetrahydrofolate dehydrogenase/cyclohydrolase family. In terms of assembly, homodimer.

It catalyses the reaction (6R)-5,10-methylene-5,6,7,8-tetrahydrofolate + NADP(+) = (6R)-5,10-methenyltetrahydrofolate + NADPH. The catalysed reaction is (6R)-5,10-methenyltetrahydrofolate + H2O = (6R)-10-formyltetrahydrofolate + H(+). It functions in the pathway one-carbon metabolism; tetrahydrofolate interconversion. Catalyzes the oxidation of 5,10-methylenetetrahydrofolate to 5,10-methenyltetrahydrofolate and then the hydrolysis of 5,10-methenyltetrahydrofolate to 10-formyltetrahydrofolate. This chain is Bifunctional protein FolD, found in Zymomonas mobilis subsp. mobilis (strain ATCC 31821 / ZM4 / CP4).